We begin with the raw amino-acid sequence, 465 residues long: Sodium-dependent phosphate transport protein 1 (465 aa).

N-linked (GlcNAc...) asparagine glycosylation is found at N39, N47, and N56. 10 consecutive transmembrane segments (helical) span residues G79–L99, S117–C137, F176–W196, V199–F219, L260–V280, G299–M319, L337–S357, T363–I383, V399–L419, and F431–G451.

The protein belongs to the major facilitator superfamily. Sodium/anion cotransporter family. Interacts with PDZK1.

Its subcellular location is the apical cell membrane. The catalysed reaction is 3 Na(+)(out) + phosphate(out) = 3 Na(+)(in) + phosphate(in). The enzyme catalyses urate(out) = urate(in). In terms of biological role, important for the resorption of phosphate by the kidney. May be involved in actively transporting phosphate into cells via Na(+) cotransport in the renal brush border membrane. Plays a role in urate transport in the kidney. This chain is Sodium-dependent phosphate transport protein 1 (Slc17a1), found in Rattus norvegicus (Rat).